Consider the following 168-residue polypeptide: Peptide deformylase (168 aa).

Cys-92 and His-134 together coordinate Fe cation. Residue Glu-135 is part of the active site. His-138 serves as a coordination point for Fe cation.

The protein belongs to the polypeptide deformylase family. Requires Fe(2+) as cofactor.

It catalyses the reaction N-terminal N-formyl-L-methionyl-[peptide] + H2O = N-terminal L-methionyl-[peptide] + formate. Removes the formyl group from the N-terminal Met of newly synthesized proteins. Requires at least a dipeptide for an efficient rate of reaction. N-terminal L-methionine is a prerequisite for activity but the enzyme has broad specificity at other positions. This Azotobacter vinelandii (strain DJ / ATCC BAA-1303) protein is Peptide deformylase.